Consider the following 151-residue polypeptide: D-aminoacyl-tRNA deacylase (151 aa).

Residues 138 to 139 (GP) carry the Gly-cisPro motif, important for rejection of L-amino acids motif.

The protein belongs to the DTD family. In terms of assembly, homodimer.

It is found in the cytoplasm. It carries out the reaction glycyl-tRNA(Ala) + H2O = tRNA(Ala) + glycine + H(+). It catalyses the reaction a D-aminoacyl-tRNA + H2O = a tRNA + a D-alpha-amino acid + H(+). Its function is as follows. An aminoacyl-tRNA editing enzyme that deacylates mischarged D-aminoacyl-tRNAs. Also deacylates mischarged glycyl-tRNA(Ala), protecting cells against glycine mischarging by AlaRS. Acts via tRNA-based rather than protein-based catalysis; rejects L-amino acids rather than detecting D-amino acids in the active site. By recycling D-aminoacyl-tRNA to D-amino acids and free tRNA molecules, this enzyme counteracts the toxicity associated with the formation of D-aminoacyl-tRNA entities in vivo and helps enforce protein L-homochirality. The polypeptide is D-aminoacyl-tRNA deacylase (Picosynechococcus sp. (strain ATCC 27264 / PCC 7002 / PR-6) (Agmenellum quadruplicatum)).